The sequence spans 514 residues: Inosine-5'-monophosphate dehydrogenase (514 aa).

CBS domains are found at residues 112–171 and 175–233; these read FISK…DTPV and MTRR…PHST. Residues 270 to 272 and 320 to 322 each bind NAD(+); these read DSS and GMG. K(+) is bound by residues Gly-322 and Gly-324. Ser-325 lines the IMP pocket. Residue Cys-327 coordinates K(+). Cys-327 acts as the Thioimidate intermediate in catalysis. IMP-binding positions include 360–362, 383–384, and 407–411; these read DGG, GG, and YRGMG. Arg-425 functions as the Proton acceptor in the catalytic mechanism. Gln-437 contributes to the IMP binding site. K(+) contacts are provided by Glu-496, Gly-497, and Gly-498. A Microbody targeting signal motif is present at residues 512–514; the sequence is AKM.

This sequence belongs to the IMPDH/GMPR family. In terms of assembly, heterotetramer. Interacts with glycosomal protein sorting receptor PEX5. Requires K(+) as cofactor.

The protein localises to the glycosome. The enzyme catalyses IMP + NAD(+) + H2O = XMP + NADH + H(+). It participates in purine metabolism; XMP biosynthesis via de novo pathway; XMP from IMP: step 1/1. Its activity is regulated as follows. Mycophenolic acid (MPA) is a non-competitive inhibitor that prevents formation of the closed enzyme conformation by binding to the same site as the amobile flap. In contrast, mizoribine monophosphate (MZP) is a competitive inhibitor that induces the closed conformation. MPA is a potent inhibitor of mammalian IMPDHs but a poor inhibitor of the bacterial enzymes. MZP is a more potent inhibitor of bacterial IMPDH. Potently inhibited by MPA. Inhibited by XMP and GMP. Catalyzes the conversion of inosine 5'-phosphate (IMP) to xanthosine 5'-phosphate (XMP), the first committed and rate-limiting step in the de novo synthesis of guanine nucleotides, and therefore plays an important role in the regulation of cell growth. This is Inosine-5'-monophosphate dehydrogenase from Leishmania donovani.